Consider the following 37-residue polypeptide: Cytochrome b6-f complex subunit 5 (37 aa).

A helical membrane pass occupies residues 5-25 (FLFGIVLGLIPITLAGLFVTA).

Belongs to the PetG family. In terms of assembly, the 4 large subunits of the cytochrome b6-f complex are cytochrome b6, subunit IV (17 kDa polypeptide, PetD), cytochrome f and the Rieske protein, while the 4 small subunits are PetG, PetL, PetM and PetN. The complex functions as a dimer.

It is found in the plastid thylakoid membrane. Functionally, component of the cytochrome b6-f complex, which mediates electron transfer between photosystem II (PSII) and photosystem I (PSI), cyclic electron flow around PSI, and state transitions. PetG is required for either the stability or assembly of the cytochrome b6-f complex. This is Cytochrome b6-f complex subunit 5 from Cuscuta reflexa (Southern Asian dodder).